We begin with the raw amino-acid sequence, 447 residues long: Protein chibby homolog 2 (447 aa).

Phosphoserine is present on residues serine 41, serine 85, serine 88, serine 96, serine 123, serine 143, serine 147, and serine 149. Residues 164–197 adopt a coiled-coil conformation; the sequence is EYLLQEENKSLRDENRALRDENKALRKENKILQV. Disordered stretches follow at residues 208 to 244 and 266 to 320; these read HEES…KENT and WAQA…EDSK. Phosphoserine occurs at positions 211 and 224. Positions 218–232 are enriched in basic and acidic residues; sequence LHKDTTSQEVVKKDN. A coiled-coil region spans residues 237–264; it reads AQRSKENTLQFIREENRALQQLLEQRQA. A compositionally biased stretch (low complexity) spans 266-276; sequence WAQAEESATSA. 2 positions are modified to phosphoserine: serine 272 and serine 275. Residues 277-290 show a composition bias toward basic and acidic residues; sequence EEGKPTSSPKEEPH. A phosphoserine mark is found at serine 333 and serine 336. A coiled-coil region spans residues 354–412; sequence LQLLREMNQALQALREENRLLQEENRALHAMREEHRVFQEENKALWENNKLKLQQRLVI.

Belongs to the chibby family. SPERT subfamily. Homodimer. Binds to NEK1.

The chain is Protein chibby homolog 2 (Cby2) from Rattus norvegicus (Rat).